We begin with the raw amino-acid sequence, 469 residues long: Citrate synthase, mitochondrial (469 aa).

The N-terminal 33 residues, M1 to S33, are a transit peptide targeting the mitochondrion. Residue H352 is part of the active site.

The protein belongs to the citrate synthase family.

The protein localises to the mitochondrion matrix. It catalyses the reaction oxaloacetate + acetyl-CoA + H2O = citrate + CoA + H(+). It participates in carbohydrate metabolism; tricarboxylic acid cycle; isocitrate from oxaloacetate: step 1/2. The polypeptide is Citrate synthase, mitochondrial (cit-1) (Neurospora crassa (strain ATCC 24698 / 74-OR23-1A / CBS 708.71 / DSM 1257 / FGSC 987)).